The chain runs to 301 residues: Probable alpha-L-glutamate ligase (301 aa).

In terms of domain architecture, ATP-grasp spans 104–287 (LQLLSRKGIG…VAGMIYEFIE (184 aa)). ATP contacts are provided by residues lysine 141, 178–179 (EF), aspartate 187, and 211–213 (RSN). Residues aspartate 248, glutamate 260, and asparagine 262 each contribute to the Mg(2+) site. Mn(2+) is bound by residues aspartate 248, glutamate 260, and asparagine 262.

The protein belongs to the RimK family. Mg(2+) is required as a cofactor. Requires Mn(2+) as cofactor.

This is Probable alpha-L-glutamate ligase from Vibrio vulnificus (strain CMCP6).